Here is a 62-residue protein sequence, read N- to C-terminus: Photosystem II reaction center protein Z (62 aa).

2 helical membrane-spanning segments follow: residues 8-28 (AVFA…VVFA) and 41-61 (FSGT…NSLI).

It belongs to the PsbZ family. In terms of assembly, PSII is composed of 1 copy each of membrane proteins PsbA, PsbB, PsbC, PsbD, PsbE, PsbF, PsbH, PsbI, PsbJ, PsbK, PsbL, PsbM, PsbT, PsbY, PsbZ, Psb30/Ycf12, at least 3 peripheral proteins of the oxygen-evolving complex and a large number of cofactors. It forms dimeric complexes.

Its subcellular location is the plastid. The protein resides in the chloroplast thylakoid membrane. In terms of biological role, may control the interaction of photosystem II (PSII) cores with the light-harvesting antenna, regulates electron flow through the 2 photosystem reaction centers. PSII is a light-driven water plastoquinone oxidoreductase, using light energy to abstract electrons from H(2)O, generating a proton gradient subsequently used for ATP formation. This chain is Photosystem II reaction center protein Z, found in Coffea arabica (Arabian coffee).